Reading from the N-terminus, the 178-residue chain is Large ribosomal subunit protein uL6 (178 aa).

This sequence belongs to the universal ribosomal protein uL6 family. In terms of assembly, part of the 50S ribosomal subunit.

This protein binds to the 23S rRNA, and is important in its secondary structure. It is located near the subunit interface in the base of the L7/L12 stalk, and near the tRNA binding site of the peptidyltransferase center. The polypeptide is Large ribosomal subunit protein uL6 (Oenococcus oeni (strain ATCC BAA-331 / PSU-1)).